Consider the following 878-residue polypeptide: DNA mismatch repair protein MutS (878 aa).

Gly618 to Ser625 is a binding site for ATP. 2 stretches are compositionally biased toward basic and acidic residues: residues Leu800–Pro811 and Gly863–Arg878. Disordered stretches follow at residues Leu800 to Leu842 and Ser859 to Arg878.

This sequence belongs to the DNA mismatch repair MutS family.

This protein is involved in the repair of mismatches in DNA. It is possible that it carries out the mismatch recognition step. This protein has a weak ATPase activity. The polypeptide is DNA mismatch repair protein MutS (Alkalilimnicola ehrlichii (strain ATCC BAA-1101 / DSM 17681 / MLHE-1)).